An 87-amino-acid polypeptide reads, in one-letter code: UPF0335 protein RL4065 (87 aa).

This sequence belongs to the UPF0335 family.

This chain is UPF0335 protein RL4065, found in Rhizobium johnstonii (strain DSM 114642 / LMG 32736 / 3841) (Rhizobium leguminosarum bv. viciae).